The sequence spans 397 residues: Methylthioribose kinase (397 aa).

Residues N43, K60, and 114–116 (EDL) contribute to the ATP site. D232 provides a ligand contact to substrate. ATP is bound at residue 249-251 (DPE). Substrate is bound at residue R340.

The protein belongs to the methylthioribose kinase family. In terms of assembly, homodimer.

The catalysed reaction is 5-(methylsulfanyl)-D-ribose + ATP = 5-(methylsulfanyl)-alpha-D-ribose 1-phosphate + ADP + H(+). It functions in the pathway amino-acid biosynthesis; L-methionine biosynthesis via salvage pathway; S-methyl-5-thio-alpha-D-ribose 1-phosphate from S-methyl-5'-thioadenosine (hydrolase route): step 2/2. Catalyzes the phosphorylation of methylthioribose into methylthioribose-1-phosphate. The sequence is that of Methylthioribose kinase from Bacillus pumilus (strain SAFR-032).